The following is a 245-amino-acid chain: Fibroblast growth factor 13 (245 aa).

2 disordered regions span residues methionine 1–asparagine 37 and threonine 213–threonine 245. Residues methionine 1 to proline 62 form a mediates targeting to the nucleus region. Residues phenylalanine 215–threonine 245 show a composition bias toward polar residues.

It belongs to the heparin-binding growth factors family.

It localises to the cell projection. The protein resides in the filopodium. It is found in the growth cone. The protein localises to the dendrite. Its subcellular location is the cell membrane. It localises to the sarcolemma. The protein resides in the cytoplasm. In terms of biological role, microtubule-binding protein which directly binds tubulin and is involved in both polymerization and stabilization of microtubules. Through its action on microtubules, may participate in the refinement of axons by negatively regulating axonal and leading processes branching. Plays a crucial role in neuron polarization and migration. Regulates voltage-gated sodium channel transport and function. Required for proper head development, it is involved in neural differentiation through regulation of the mek5-erk5 pathway. The protein is Fibroblast growth factor 13 (fgf13) of Xenopus laevis (African clawed frog).